A 125-amino-acid polypeptide reads, in one-letter code: Prefoldin subunit beta (125 aa).

Belongs to the prefoldin subunit beta family. As to quaternary structure, heterohexamer of two alpha and four beta subunits.

It is found in the cytoplasm. Molecular chaperone capable of stabilizing a range of proteins. Seems to fulfill an ATP-independent, HSP70-like function in archaeal de novo protein folding. In Sulfolobus acidocaldarius (strain ATCC 33909 / DSM 639 / JCM 8929 / NBRC 15157 / NCIMB 11770), this protein is Prefoldin subunit beta.